A 97-amino-acid chain; its full sequence is Aspartyl/glutamyl-tRNA(Asn/Gln) amidotransferase subunit C (97 aa).

Belongs to the GatC family. In terms of assembly, heterotrimer of A, B and C subunits.

It carries out the reaction L-glutamyl-tRNA(Gln) + L-glutamine + ATP + H2O = L-glutaminyl-tRNA(Gln) + L-glutamate + ADP + phosphate + H(+). It catalyses the reaction L-aspartyl-tRNA(Asn) + L-glutamine + ATP + H2O = L-asparaginyl-tRNA(Asn) + L-glutamate + ADP + phosphate + 2 H(+). In terms of biological role, allows the formation of correctly charged Asn-tRNA(Asn) or Gln-tRNA(Gln) through the transamidation of misacylated Asp-tRNA(Asn) or Glu-tRNA(Gln) in organisms which lack either or both of asparaginyl-tRNA or glutaminyl-tRNA synthetases. The reaction takes place in the presence of glutamine and ATP through an activated phospho-Asp-tRNA(Asn) or phospho-Glu-tRNA(Gln). The sequence is that of Aspartyl/glutamyl-tRNA(Asn/Gln) amidotransferase subunit C from Prochlorococcus marinus (strain AS9601).